The following is a 66-amino-acid chain: Stress-induced protein KIN2 (66 aa).

The segment covering 1–10 (MSETNKNAFQ) has biased composition (polar residues). The interval 1-20 (MSETNKNAFQAGQAAGKAEE) is disordered. 2 consecutive repeats follow at residues 31 to 35 (DAAAA) and 49 to 53 (DAAVG).

In terms of assembly, interacts with DEK3. As to expression, expressed at high levels in embryos and mature seeds.

The polypeptide is Stress-induced protein KIN2 (Arabidopsis thaliana (Mouse-ear cress)).